A 124-amino-acid polypeptide reads, in one-letter code: Small ribosomal subunit protein uS12 (124 aa).

3-methylthioaspartic acid is present on Asp-89.

This sequence belongs to the universal ribosomal protein uS12 family. In terms of assembly, part of the 30S ribosomal subunit. Contacts proteins S8 and S17. May interact with IF1 in the 30S initiation complex.

With S4 and S5 plays an important role in translational accuracy. In terms of biological role, interacts with and stabilizes bases of the 16S rRNA that are involved in tRNA selection in the A site and with the mRNA backbone. Located at the interface of the 30S and 50S subunits, it traverses the body of the 30S subunit contacting proteins on the other side and probably holding the rRNA structure together. The combined cluster of proteins S8, S12 and S17 appears to hold together the shoulder and platform of the 30S subunit. The polypeptide is Small ribosomal subunit protein uS12 (Acinetobacter baylyi (strain ATCC 33305 / BD413 / ADP1)).